Consider the following 373-residue polypeptide: Anhydro-N-acetylmuramic acid kinase (373 aa).

Residue 12 to 19 (GTSLDGVD) participates in ATP binding.

This sequence belongs to the anhydro-N-acetylmuramic acid kinase family.

The catalysed reaction is 1,6-anhydro-N-acetyl-beta-muramate + ATP + H2O = N-acetyl-D-muramate 6-phosphate + ADP + H(+). The protein operates within amino-sugar metabolism; 1,6-anhydro-N-acetylmuramate degradation. Its pathway is cell wall biogenesis; peptidoglycan recycling. Catalyzes the specific phosphorylation of 1,6-anhydro-N-acetylmuramic acid (anhMurNAc) with the simultaneous cleavage of the 1,6-anhydro ring, generating MurNAc-6-P. Is required for the utilization of anhMurNAc either imported from the medium or derived from its own cell wall murein, and thus plays a role in cell wall recycling. This Erwinia tasmaniensis (strain DSM 17950 / CFBP 7177 / CIP 109463 / NCPPB 4357 / Et1/99) protein is Anhydro-N-acetylmuramic acid kinase.